Consider the following 142-residue polypeptide: Hemoglobin subunit alpha (142 aa).

The 141-residue stretch at 2–142 (VLSPADKSNV…VSTVLTSKYR (141 aa)) folds into the Globin domain. Position 4 is a phosphoserine (S4). K8 and K12 each carry N6-succinyllysine. Residue K17 is modified to N6-acetyllysine; alternate. K17 is subject to N6-succinyllysine; alternate. Y25 carries the phosphotyrosine modification. Residue S36 is modified to Phosphoserine. At K41 the chain carries N6-succinyllysine. Residue S50 is modified to Phosphoserine. H59 contributes to the O2 binding site. H88 contacts heme b. S103 carries the phosphoserine modification. T109 bears the Phosphothreonine mark. S125 and S132 each carry phosphoserine. Phosphothreonine occurs at positions 135 and 138. At S139 the chain carries Phosphoserine.

The protein belongs to the globin family. In terms of assembly, heterotetramer of two alpha chains and two beta chains. As to expression, red blood cells.

Its function is as follows. Involved in oxygen transport from the lung to the various peripheral tissues. In terms of biological role, hemopressin acts as an antagonist peptide of the cannabinoid receptor CNR1. Hemopressin-binding efficiently blocks cannabinoid receptor CNR1 and subsequent signaling. This is Hemoglobin subunit alpha (HBA) from Ateles geoffroyi (Black-handed spider monkey).